The following is a 666-amino-acid chain: DEAD-box ATP-dependent RNA helicase 30 (666 aa).

Positions 53-102 are disordered; the sequence is PDPNLPRRLPFPSSSSTPTAAAPPDSGEPSRARARTETYRTGDMNPYDLR. The segment covering 64–76 has biased composition (low complexity); the sequence is PSSSSTPTAAAPP. Residues 80–92 are compositionally biased toward basic and acidic residues; that stretch reads EPSRARARTETYR. The Q motif motif lies at 251–279; sequence RYFQEANFPDYCMQAIAKSGFVEPTPIQS. The Helicase ATP-binding domain occupies 282 to 457; the sequence is WPMALKGRDM…RQFLQNPYKV (176 aa). Residue 295 to 302 participates in ATP binding; it reads AQTGSGKT. The short motif at 405-408 is the DEAD box element; sequence DEAD. The Helicase C-terminal domain occupies 485 to 630; that stretch reads RLSKLLSDLM…VVNPALESMA (146 aa). The interval 632–666 is disordered; it reads SASSMGGGNFRSRGRGGFGNRSGSNSIPIRGRRPY. Over residues 636 to 651 the composition is skewed to gly residues; the sequence is MGGGNFRSRGRGGFGN.

It belongs to the DEAD box helicase family. DDX5/DBP2 subfamily.

Its subcellular location is the nucleus. The catalysed reaction is ATP + H2O = ADP + phosphate + H(+). ATP-dependent RNA helicase involved nonsense-mediated mRNA decay and ribosome biogenesis through rRNA processing. This chain is DEAD-box ATP-dependent RNA helicase 30, found in Oryza sativa subsp. japonica (Rice).